A 1859-amino-acid polypeptide reads, in one-letter code: Y' element ATP-dependent helicase protein 1 copy 6 (1859 aa).

In terms of domain architecture, Helicase ATP-binding spans 861–1038 (EIYMADTPSV…LQRIGLTGLA (178 aa)). An ATP-binding site is contributed by 874 to 881 (APPGYGKT). Positions 1095 to 1244 (KLLLALFEIE…EFYGLESKKG (150 aa)) constitute a Helicase C-terminal domain. Low complexity predominate over residues 1318–1461 (ANASTNATTN…ATTTESTNAS (144 aa)). The segment at 1318-1485 (ANASTNATTN…RFHPVTDINK (168 aa)) is disordered. Basic and acidic residues predominate over residues 1462 to 1485 (AKEDANKDGNAEDNRFHPVTDINK).

It belongs to the helicase family. Yeast subtelomeric Y' repeat subfamily.

In terms of biological role, catalyzes DNA unwinding and is involved in telomerase-independent telomere maintenance. The chain is Y' element ATP-dependent helicase protein 1 copy 6 (YRF1-6) from Saccharomyces cerevisiae (strain ATCC 204508 / S288c) (Baker's yeast).